The sequence spans 317 residues: ATP synthase gamma chain (317 aa).

It belongs to the ATPase gamma chain family. As to quaternary structure, F-type ATPases have 2 components, CF(1) - the catalytic core - and CF(0) - the membrane proton channel. CF(1) has five subunits: alpha(3), beta(3), gamma(1), delta(1), epsilon(1). CF(0) has three main subunits: a, b and c.

The protein resides in the cellular thylakoid membrane. Its function is as follows. Produces ATP from ADP in the presence of a proton gradient across the membrane. The gamma chain is believed to be important in regulating ATPase activity and the flow of protons through the CF(0) complex. The protein is ATP synthase gamma chain of Acaryochloris marina (strain MBIC 11017).